The primary structure comprises 80 residues: UPF0057 membrane protein ZK632.10 (80 aa).

2 helical membrane-spanning segments follow: residues 4 to 24 (ILLAILAIFLPPIAVLLDVGC) and 32 to 52 (ILLTCLGIIPGIIHAWYIILC).

Belongs to the UPF0057 (PMP3) family.

The protein localises to the membrane. This Caenorhabditis elegans protein is UPF0057 membrane protein ZK632.10.